Consider the following 170-residue polypeptide: Probable T4-type lysozyme 1 (170 aa).

Glutamate 13 (proton donor) is an active-site residue. Aspartate 22 (nucleophile) is an active-site residue.

This sequence belongs to the glycosyl hydrolase 24 family.

The catalysed reaction is Hydrolysis of (1-&gt;4)-beta-linkages between N-acetylmuramic acid and N-acetyl-D-glucosamine residues in a peptidoglycan and between N-acetyl-D-glucosamine residues in chitodextrins.. In Dictyostelium discoideum (Social amoeba), this protein is Probable T4-type lysozyme 1.